The primary structure comprises 194 residues: Recombination protein RecR (194 aa).

The segment at 52 to 67 (CTECRTFTEEEVCHIC) adopts a C4-type zinc-finger fold. The Toprim domain occupies 76–171 (GQICVVESPA…EASRIAHGVP (96 aa)).

It belongs to the RecR family.

May play a role in DNA repair. It seems to be involved in an RecBC-independent recombinational process of DNA repair. It may act with RecF and RecO. This Vibrio campbellii (strain ATCC BAA-1116) protein is Recombination protein RecR.